Reading from the N-terminus, the 169-residue chain is Shikimate kinase (169 aa).

12–17 (GAGKST) lines the ATP pocket. Residue S16 coordinates Mg(2+). Substrate-binding residues include D34, R58, and G80. R117 contributes to the ATP binding site. Position 136 (R136) interacts with substrate.

This sequence belongs to the shikimate kinase family. Monomer. It depends on Mg(2+) as a cofactor.

It localises to the cytoplasm. The enzyme catalyses shikimate + ATP = 3-phosphoshikimate + ADP + H(+). It functions in the pathway metabolic intermediate biosynthesis; chorismate biosynthesis; chorismate from D-erythrose 4-phosphate and phosphoenolpyruvate: step 5/7. Catalyzes the specific phosphorylation of the 3-hydroxyl group of shikimic acid using ATP as a cosubstrate. The protein is Shikimate kinase of Rhodococcus erythropolis (strain PR4 / NBRC 100887).